Consider the following 518-residue polypeptide: Beta-TrCP (518 aa).

The span at 1 to 12 shows a compositional bias: polar residues; the sequence is MEGFSCSLQPPT. A disordered region spans residues 1–24; the sequence is MEGFSCSLQPPTASEREDCNRDEP. Residues 14–24 are compositionally biased toward basic and acidic residues; that stretch reads SEREDCNRDEP. The F-box domain maps to 119–157; it reads DHIAENILSYLDAKSLCSAELVCKEWYRVTSDGMLWKKL. 7 WD repeats span residues 230 to 258, 270 to 298, 310 to 338, 353 to 381, 393 to 421, 433 to 461, and 482 to 510; these read ETSK…KIWD, GHTG…RVWD, HHCE…AVWD, GHRA…KVWN, GHKR…RLWD, GHEE…KVWD, and EHSG…LIWD.

In terms of assembly, part of a SCF (SKP1-cullin-F-box) ubiquitin-protein ligase complex. Interacts with fbxo5.

In terms of biological role, substrate recognition component of a SCF (SKP1-CUL1-F-box protein) E3 ubiquitin-protein ligase complex which mediates the ubiquitination and subsequent proteasomal degradation of target proteins. Probably recognizes and binds to phosphorylated target proteins. May participate in Wnt signaling. This chain is Beta-TrCP (fbxw1), found in Xenopus laevis (African clawed frog).